The following is a 150-amino-acid chain: Flagellar assembly factor FliW (150 aa).

Belongs to the FliW family. In terms of assembly, interacts with translational regulator CsrA and flagellin(s).

It localises to the cytoplasm. Acts as an anti-CsrA protein, binds CsrA and prevents it from repressing translation of its target genes, one of which is flagellin. Binds to flagellin and participates in the assembly of the flagellum. This is Flagellar assembly factor FliW from Leptospira borgpetersenii serovar Hardjo-bovis (strain JB197).